Here is a 144-residue protein sequence, read N- to C-terminus: Large ribosomal subunit protein uL15 (144 aa).

Positions 1–54 (MRLNTLSPAEGSKKAGKRLGRGIGSGLGKTGGRGHKGQNSRSGGGVRRGFEGGQ) are disordered. Gly residues predominate over residues 21–31 (RGIGSGLGKTG).

This sequence belongs to the universal ribosomal protein uL15 family. As to quaternary structure, part of the 50S ribosomal subunit.

Binds to the 23S rRNA. The chain is Large ribosomal subunit protein uL15 from Enterobacter sp. (strain 638).